The primary structure comprises 79 residues: Acyl carrier protein (79 aa).

In terms of domain architecture, Carrier spans 2 to 77 (DNIEQRVKKI…QAIDYARANV (76 aa)). Serine 37 is subject to O-(pantetheine 4'-phosphoryl)serine.

This sequence belongs to the acyl carrier protein (ACP) family. In terms of processing, 4'-phosphopantetheine is transferred from CoA to a specific serine of apo-ACP by AcpS. This modification is essential for activity because fatty acids are bound in thioester linkage to the sulfhydryl of the prosthetic group.

It is found in the cytoplasm. Its pathway is lipid metabolism; fatty acid biosynthesis. Carrier of the growing fatty acid chain in fatty acid biosynthesis. The polypeptide is Acyl carrier protein (Burkholderia cenocepacia (strain HI2424)).